The following is a 488-amino-acid chain: MALSSTAATTSSKLKLSNPPSLSHTFTASASASVSNSTSFRPKLTLTRLSSSFLNPSTILHLTPSQRTNRPSSSPFTVRAARGKFERKKPHLNIGTIGHVDHGKTTLTAALTMALACLGNSAPKKYDEIDAAPEERARGITINTATVEYETETRHYAHVDCPGHADYVKNMITGAAQMDGAILVVSGADGPMPQTKEHILLAKQVGVPSVVVFLNKQDQVDDEELLELVELEVRELLSSYEFPGDDIPIVSGSALLALEALMANPTLKRGNNQWVDKIYQLMDEVDKYIPIPQRQTELPFLLAIEDVFSITXRGTVATGRIERGLVKVGDVVDLVGLRETRNTTVTGVEMFQKILDDAMAGDNVGLLLRGIQKIDIQRGMVLAKPGTITPHSKFSAIVYVLKKEEGGRHSPFFAGYRPQFYMRTTDVTGKVTSIMNDKDEESKMVMPGDRVKIVVELIVPVAIEQGMRFAIREGGKTVGAGVIGAIIE.

Residues 1-20 form a disordered region; that stretch reads MALSSTAATTSSKLKLSNPP. The N-terminal 79 residues, 1 to 79, are a transit peptide targeting the chloroplast; sequence MALSSTAATT…RPSSSPFTVR (79 aa). The tr-type G domain maps to 89–293; sequence KPHLNIGTIG…EVDKYIPIPQ (205 aa). The G1 stretch occupies residues 98–105; it reads GHVDHGKT. GTP is bound at residue 98–105; sequence GHVDHGKT. The segment at 139 to 143 is G2; that stretch reads GITIN. The interval 160–163 is G3; it reads DCPG. GTP is bound by residues 160–164 and 215–218; these read DCPGH and NKQD. Positions 215–218 are G4; that stretch reads NKQD. Positions 253–255 are G5; the sequence is SAL.

This sequence belongs to the TRAFAC class translation factor GTPase superfamily. Classic translation factor GTPase family. EF-Tu/EF-1A subfamily. In terms of tissue distribution, higher expression in leaves than in roots.

The protein localises to the plastid. It localises to the chloroplast. This protein promotes the GTP-dependent binding of aminoacyl-tRNA to the A-site of ribosomes during protein biosynthesis. This Pisum sativum (Garden pea) protein is Elongation factor Tu, chloroplastic (tufA).